The sequence spans 209 residues: Uracil phosphoribosyltransferase (209 aa).

5-phospho-alpha-D-ribose 1-diphosphate is bound by residues R77, R102, and 129-137; that span reads DPMLATGVS. Residues I192 and 197–199 each bind uracil; that span reads GDA. Residue D198 participates in 5-phospho-alpha-D-ribose 1-diphosphate binding.

It belongs to the UPRTase family. Mg(2+) is required as a cofactor.

It carries out the reaction UMP + diphosphate = 5-phospho-alpha-D-ribose 1-diphosphate + uracil. It functions in the pathway pyrimidine metabolism; UMP biosynthesis via salvage pathway; UMP from uracil: step 1/1. With respect to regulation, allosterically activated by GTP. Catalyzes the conversion of uracil and 5-phospho-alpha-D-ribose 1-diphosphate (PRPP) to UMP and diphosphate. This chain is Uracil phosphoribosyltransferase, found in Metamycoplasma arthritidis (strain 158L3-1) (Mycoplasma arthritidis).